The following is a 175-amino-acid chain: Large ribosomal subunit protein uL10 (175 aa).

The protein belongs to the universal ribosomal protein uL10 family. As to quaternary structure, part of the ribosomal stalk of the 50S ribosomal subunit. The N-terminus interacts with L11 and the large rRNA to form the base of the stalk. The C-terminus forms an elongated spine to which L12 dimers bind in a sequential fashion forming a multimeric L10(L12)X complex.

Functionally, forms part of the ribosomal stalk, playing a central role in the interaction of the ribosome with GTP-bound translation factors. This chain is Large ribosomal subunit protein uL10, found in Psychrobacter sp. (strain PRwf-1).